Here is a 76-residue protein sequence, read N- to C-terminus: Large ribosomal subunit protein bL28 (76 aa).

Belongs to the bacterial ribosomal protein bL28 family.

The polypeptide is Large ribosomal subunit protein bL28 (Opitutus terrae (strain DSM 11246 / JCM 15787 / PB90-1)).